A 128-amino-acid polypeptide reads, in one-letter code: MRRDEYFEKLLEVIEELKIEAEEKPIIVEGKRDVESLEKLGVEGTFIIIAKTPIYLIADELVRKRVKEVILLTDFDRRGRMLAKAIIEEFRHRGIKVNTKIRHEIFIYTNSGIRDIESLFSYVNKRLF.

One can recognise a Toprim domain in the interval 23 to 105; that stretch reads EKPIIVEGKR…KVNTKIRHEI (83 aa). The Mg(2+) site is built by Glu-29, Asp-74, and Asp-76.

Belongs to the UPF0292 family. The cofactor is Mg(2+).

The polypeptide is UPF0292 protein MJ1624 (Methanocaldococcus jannaschii (strain ATCC 43067 / DSM 2661 / JAL-1 / JCM 10045 / NBRC 100440) (Methanococcus jannaschii)).